Here is a 236-residue protein sequence, read N- to C-terminus: Chorionic somatomammotropin hormone 1 (236 aa).

The first 36 residues, 1–36, serve as a signal peptide directing secretion; it reads MAPASSHRGHQWICDLVRGSCLLLLLVVSNLLLCQG. Asn89 is a glycosylation site (N-linked (GlcNAc...) asparagine). Cystine bridges form between Cys98–Cys214 and Cys231–Cys236.

Belongs to the somatotropin/prolactin family.

It localises to the secreted. The chain is Chorionic somatomammotropin hormone 1 (CSH1) from Bos taurus (Bovine).